The following is a 348-amino-acid chain: MGIRIQELCKQFEDFTALAGIDLDIRQGELLALLGPSGSGKTTLLRIIAGLEHADAGRVLFGDEDATMMSVQARRVGFVFQHYALFKHMSVYENVAFGLRVRRGKARWPESQISARVFELLSLVQLDGLEQRYPMQLSGGQRQRVALARALAIEPRVLLLDEPFGALDAQVRRDLRRWLREIHDRTGLTTVFVTHDQEEALELADRVAILNQGRIEQVASPAEVYNRPSSPFVYSFVGAVNRLPGCVGADGLEVAGIVLSCPPQLSGWGAVDLYVRPEDLVLDAQEGWLAIVLWSQRSGPRMRVRARLEHSAHEVEIELSSATDEYVEGQKLRLIPRHYGVFFSESGG.

The 235-residue stretch at Ile3–Val237 folds into the ABC transporter domain. Gly35–Thr42 lines the ATP pocket.

This sequence belongs to the ABC transporter superfamily. Sulfate/tungstate importer (TC 3.A.1.6) family. As to quaternary structure, the complex is composed of two ATP-binding proteins (CysA), two transmembrane proteins (CysT and CysW) and a solute-binding protein (CysP).

It localises to the cell inner membrane. It carries out the reaction sulfate(out) + ATP + H2O = sulfate(in) + ADP + phosphate + H(+). It catalyses the reaction thiosulfate(out) + ATP + H2O = thiosulfate(in) + ADP + phosphate + H(+). Its function is as follows. Part of the ABC transporter complex CysAWTP involved in sulfate/thiosulfate import. Responsible for energy coupling to the transport system. The chain is Sulfate/thiosulfate import ATP-binding protein CysA from Xylella fastidiosa (strain 9a5c).